Reading from the N-terminus, the 83-residue chain is Cytochrome b559 subunit alpha (83 aa).

A helical membrane pass occupies residues 21–35 (VIHSITIPSLFIAGW). A heme-binding site is contributed by His-23.

It belongs to the PsbE/PsbF family. Heterodimer of an alpha subunit and a beta subunit. PSII is composed of 1 copy each of membrane proteins PsbA, PsbB, PsbC, PsbD, PsbE, PsbF, PsbH, PsbI, PsbJ, PsbK, PsbL, PsbM, PsbT, PsbX, PsbY, PsbZ, Psb30/Ycf12, at least 3 peripheral proteins of the oxygen-evolving complex and a large number of cofactors. It forms dimeric complexes. Requires heme b as cofactor.

The protein resides in the plastid. It localises to the chloroplast thylakoid membrane. Functionally, this b-type cytochrome is tightly associated with the reaction center of photosystem II (PSII). PSII is a light-driven water:plastoquinone oxidoreductase that uses light energy to abstract electrons from H(2)O, generating O(2) and a proton gradient subsequently used for ATP formation. It consists of a core antenna complex that captures photons, and an electron transfer chain that converts photonic excitation into a charge separation. The polypeptide is Cytochrome b559 subunit alpha (Acorus calamus (Sweet flag)).